The sequence spans 1141 residues: Probable ubiquitin carboxyl-terminal hydrolase 2 (1141 aa).

Threonine 112 is subject to Phosphothreonine. Serine 113 is subject to Phosphoserine. At threonine 115 the chain carries Phosphothreonine. One can recognise a USP domain in the interval 614–1124; that stretch reads IGLENTGNLC…NPYMLTYIRK (511 aa). Cysteine 623 functions as the Nucleophile in the catalytic mechanism. Position 721 is a phosphothreonine (threonine 721). At serine 722 the chain carries Phosphoserine. The interval 748–770 is disordered; sequence EEQAQGLEQEQGQDEAKSPAEQS. The active-site Proton acceptor is the histidine 1076.

This sequence belongs to the peptidase C19 family.

The enzyme catalyses Thiol-dependent hydrolysis of ester, thioester, amide, peptide and isopeptide bonds formed by the C-terminal Gly of ubiquitin (a 76-residue protein attached to proteins as an intracellular targeting signal).. The chain is Probable ubiquitin carboxyl-terminal hydrolase 2 (ubp2) from Schizosaccharomyces pombe (strain 972 / ATCC 24843) (Fission yeast).